A 506-amino-acid polypeptide reads, in one-letter code: Maturase K (506 aa).

This sequence belongs to the intron maturase 2 family. MatK subfamily.

Its subcellular location is the plastid. It is found in the chloroplast. Usually encoded in the trnK tRNA gene intron. Probably assists in splicing its own and other chloroplast group II introns. This Trifolium repens (Creeping white clover) protein is Maturase K.